Reading from the N-terminus, the 90-residue chain is U7-theraphotoxin-Hhn1l (90 aa).

A signal peptide spans M1–S19. A propeptide spanning residues F20–E50 is cleaved from the precursor. 3 disulfides stabilise this stretch: C51–C65, C58–C70, and C64–C81.

Belongs to the neurotoxin 10 (Hwtx-1) family. 13 (Hntx-13) subfamily. As to expression, expressed by the venom gland.

Its subcellular location is the secreted. Functionally, ion channel inhibitor. In Cyriopagopus hainanus (Chinese bird spider), this protein is U7-theraphotoxin-Hhn1l.